A 191-amino-acid chain; its full sequence is NAD(P)H-quinone oxidoreductase subunit L, chloroplastic (191 aa).

Residues 1–46 (MSRCGSLGLYAPNALPSLSLKPRSVKSPFCITSHTKPNDTLLHNVN) constitute a chloroplast transit peptide. The next 3 helical transmembrane spans lie at 61 to 81 (TILA…ALAI), 93 to 113 (VVLD…PIIM), and 129 to 149 (YLQF…APFL).

This sequence belongs to the NDH complex subunit L family. As to quaternary structure, part of the chloroplast NDH complex, composed of a mixture of chloroplast and nucleus encoded subunits. Component of the NDH subcomplex A, at least composed of ndhH, ndhI, ndhJ, ndhK, ndhL, ndhM, ndhN and ndhO.

Its subcellular location is the plastid. It is found in the chloroplast thylakoid membrane. The enzyme catalyses a plastoquinone + NADH + (n+1) H(+)(in) = a plastoquinol + NAD(+) + n H(+)(out). It carries out the reaction a plastoquinone + NADPH + (n+1) H(+)(in) = a plastoquinol + NADP(+) + n H(+)(out). Its function is as follows. NDH shuttles electrons from NAD(P)H:plastoquinone, via FMN and iron-sulfur (Fe-S) centers, to quinones in the photosynthetic chain and possibly in a chloroplast respiratory chain. The immediate electron acceptor for the enzyme in this species is believed to be plastoquinone. Couples the redox reaction to proton translocation, and thus conserves the redox energy in a proton gradient. This is NAD(P)H-quinone oxidoreductase subunit L, chloroplastic from Arabidopsis thaliana (Mouse-ear cress).